Reading from the N-terminus, the 434-residue chain is MVNTSEENNSNAVMPRKFQGGMNQVGHGGGRIVGQNRRALGGINQNFVHGRPYPCVVHKRVLSEKHEICEKKQADLGHRPITRRFAAKIAGSQQSYAEKTKNSNPLNLNEFGNSIAIDDELKSPEDQPEPMTLEHTEPMHSDPLEMEEVEMEDIEGEMILDIDSCDANNSLAVVEYIEDLHAYYRKIEYLGCVSPTYMDEQLDLNERMRAILVDWLIEVHDKFDLMQETLFLTVNLIDRFLAKQNVVRKKLQLVGLVAMLLACKYEEVSVPVVSDLIHIADRAYTRKDILEMEKLMLNTLQYNMSLPTAYVFMRRFLKAAQADKKLELVAFFLVDLSLVEYEMLKFPPSLVAAAAVYTAQCTVSGFKHWNKTCEWHTNYSEDQLLECSMLMVGFHQKAGAGKLTGVHRKYGSAKFSFTAKCEPACFLLENKNQP.

The protein belongs to the cyclin family. Cyclin AB subfamily. As to quaternary structure, interacts with the CDC2 protein kinase to form a serine/threonine kinase holoenzyme complex also known as maturation promoting factor (MPF). The cyclin subunit imparts substrate specificity to the complex.

In terms of biological role, essential for the control of the cell cycle at the G2/M (mitosis) transition. The protein is G2/mitotic-specific cyclin-2 of Medicago sativa subsp. varia (Alfalfa).